The primary structure comprises 224 residues: UPF0758 protein HEAR2468 (224 aa).

Positions 102–224 constitute an MPN domain; sequence ALNSPQAVKQ…VYSFAEQGQL (123 aa). Zn(2+)-binding residues include H173, H175, and D186. Positions 173–186 match the JAMM motif motif; sequence HNHPSGTPEPSAAD.

It belongs to the UPF0758 family.

The chain is UPF0758 protein HEAR2468 from Herminiimonas arsenicoxydans.